Reading from the N-terminus, the 421-residue chain is Acyl-coenzyme A thioesterase 6 (421 aa).

Active-site charge relay system residues include Ser-232, Asp-326, and His-360. The Peroxisome targeting signal signature appears at 419-421; the sequence is SKI.

The protein belongs to the C/M/P thioester hydrolase family.

It is found in the peroxisome. The protein resides in the cytoplasm. The catalysed reaction is pristanoyl-CoA + H2O = 2,6,10,14-tetramethylpentadecanoate + CoA + H(+). It carries out the reaction phytanoyl-CoA + H2O = 3,7,11,15-tetramethylhexadecanoate + CoA + H(+). Its pathway is lipid metabolism; fatty acid metabolism. In terms of biological role, catalyzes the hydrolysis of acyl-CoAs into free fatty acids and coenzyme A (CoASH), regulating their respective intracellular levels. Catalyzes the hydrolysis of phytanoyl-CoA and pristanoyl-CoA, two methyl-branched fatty acids derived from phytol, that enter the body via the diet. In Homo sapiens (Human), this protein is Acyl-coenzyme A thioesterase 6.